We begin with the raw amino-acid sequence, 493 residues long: Cytochrome P450 2W1 (493 aa).

The first 23 residues, 1–23, serve as a signal peptide directing secretion; that stretch reads MALLLLGVWGILLLLGLWGLLQG. An N-linked (GlcNAc...) asparagine glycan is attached at Asn180. Cys436 is a heme binding site.

The protein belongs to the cytochrome P450 family. It depends on heme as a cofactor. As to expression, detected in colon, ileum, and testes.

The protein resides in the endoplasmic reticulum lumen. Its subcellular location is the cell membrane. It is found in the microsome membrane. It catalyses the reaction all-trans-retinoate + reduced [NADPH--hemoprotein reductase] + O2 = all-trans-4-hydroxyretinoate + oxidized [NADPH--hemoprotein reductase] + H2O + H(+). It carries out the reaction 1-(9Z-octadecenoyl)-sn-glycero-3-phosphocholine + reduced [NADPH--hemoprotein reductase] + O2 = 1-[8-hydroxy-(9Z)-octadecenoyl]-sn-glycero-3-phosphocholine + oxidized [NADPH--hemoprotein reductase] + H2O + H(+). The enzyme catalyses 1-(9Z-octadecenoyl)-sn-glycero-3-phosphocholine + reduced [NADPH--hemoprotein reductase] + O2 = 1-[11-hydroxy-(9Z)-octadecenoyl]-sn-glycero-3-phosphocholine + oxidized [NADPH--hemoprotein reductase] + H2O + H(+). The catalysed reaction is 1-(9Z-octadecenoyl)-sn-glycero-3-phosphocholine + reduced [NADPH--hemoprotein reductase] + O2 = 1-[(9S,10R)-epoxy-octadecanoyl]-sn-glycero-3-phosphocholine + oxidized [NADPH--hemoprotein reductase] + H2O + H(+). It catalyses the reaction 1-(9Z-octadecenoyl)-sn-glycero-3-phosphocholine + reduced [NADPH--hemoprotein reductase] + O2 = 1-[(9R,10S)-epoxy-octadecanoyl]-sn-glycero-3-phosphocholine + oxidized [NADPH--hemoprotein reductase] + H2O + H(+). A cytochrome P450 monooxygenase that may play a role in retinoid and phospholipid metabolism. Catalyzes the hydroxylation of saturated carbon hydrogen bonds. Hydroxylates all trans-retinoic acid (atRA) to 4-hydroxyretinoate and may regulate atRA clearance. Other retinoids such as all-trans retinol and all-trans retinal are potential endogenous substrates. Catalyzes both epoxidation of double bonds and hydroxylation of carbon hydrogen bonds of the fatty acyl chain of 1-acylphospholipids/2-lysophospholipids. Can metabolize various lysophospholipids classes including lysophosphatidylcholines (LPCs), lysophosphatidylinositols (LPIs), lysophosphatidylserines (LPSs), lysophosphatidylglycerols (LPGs), lysophosphatidylethanolamines (LPEs) and lysophosphatidic acids (LPAs). Has low or no activity toward 2-acylphospholipids/1-lysophospholipids, diacylphospholipids and free fatty acids. May play a role in tumorigenesis by activating procarcinogens such as aflatoxin B1, polycyclic aromatic hydrocarbon dihydrodiols and aromatic amines. Mechanistically, uses molecular oxygen inserting one oxygen atom into a substrate, and reducing the second into a water molecule, with two electrons provided by NADPH via cytochrome P450 reductase (CPR; NADPH-ferrihemoprotein reductase). This Mus musculus (Mouse) protein is Cytochrome P450 2W1 (Cyp2w1).